The following is a 97-amino-acid chain: Large ribosomal subunit protein uL23 (97 aa).

Belongs to the universal ribosomal protein uL23 family. Part of the 50S ribosomal subunit. Contacts protein L29, and trigger factor when it is bound to the ribosome.

One of the early assembly proteins it binds 23S rRNA. One of the proteins that surrounds the polypeptide exit tunnel on the outside of the ribosome. Forms the main docking site for trigger factor binding to the ribosome. In Brucella melitensis biotype 2 (strain ATCC 23457), this protein is Large ribosomal subunit protein uL23.